The sequence spans 228 residues: Prolactin-2B1 (228 aa).

The N-terminal stretch at 1–31 is a signal peptide; the sequence is MLLYLPQIFSSRASSLLFLVPYLLFWENVAS. 2 disulfides stabilise this stretch: Cys89–Cys194 and Cys203–Cys228. Residue Asn173 is glycosylated (N-linked (GlcNAc...) asparagine).

Belongs to the somatotropin/prolactin family. Expression restricted to the placenta in trophoblast cells within the labyrinth zone.

The protein resides in the secreted. This chain is Prolactin-2B1 (Prl2b1), found in Rattus norvegicus (Rat).